Here is a 331-residue protein sequence, read N- to C-terminus: MATLYYDTDADLGLLSGKTVAIIGYGSQGHAHALNLKDSGVDVVVGLYEGSRSADKAKADGLEVLSVADAAAKADWIMVLLPDEFQKEVYDKEIAPHLSAGKVLSFAHGFNIRFGLIKPPADVDVVMIAPKGPGHTVRWEYQNAQGVPALFAIEQDASGNARGLAMAYAKGIGGTRAGILETNFKEETETDLFGEQAVLCGGLSELVKAGFETLVEAGYQPELAYFECLHEVKLIVDLMVKGGLSAMRDSISNTAEYGDYVSGPRLITAETKAEMKRILGDIQDGTFAKNFVAECEAGKPEMNKIRERDSAHKIEEVGKGLRAMFSWLKAA.

In terms of domain architecture, KARI N-terminal Rossmann spans 1–182 (MATLYYDTDA…GGTRAGILET (182 aa)). NADP(+)-binding positions include 25-28 (YGSQ), Ser51, Ser53, and 83-86 (DEFQ). Residue His108 is part of the active site. Position 134 (Gly134) interacts with NADP(+). Residues 183 to 328 (NFKEETETDL…KGLRAMFSWL (146 aa)) enclose the KARI C-terminal knotted domain. The Mg(2+) site is built by Asp191, Glu195, Glu227, and Glu231. Residue Ser252 coordinates substrate.

The protein belongs to the ketol-acid reductoisomerase family. It depends on Mg(2+) as a cofactor.

It catalyses the reaction (2R)-2,3-dihydroxy-3-methylbutanoate + NADP(+) = (2S)-2-acetolactate + NADPH + H(+). The catalysed reaction is (2R,3R)-2,3-dihydroxy-3-methylpentanoate + NADP(+) = (S)-2-ethyl-2-hydroxy-3-oxobutanoate + NADPH + H(+). The protein operates within amino-acid biosynthesis; L-isoleucine biosynthesis; L-isoleucine from 2-oxobutanoate: step 2/4. Its pathway is amino-acid biosynthesis; L-valine biosynthesis; L-valine from pyruvate: step 2/4. In terms of biological role, involved in the biosynthesis of branched-chain amino acids (BCAA). Catalyzes an alkyl-migration followed by a ketol-acid reduction of (S)-2-acetolactate (S2AL) to yield (R)-2,3-dihydroxy-isovalerate. In the isomerase reaction, S2AL is rearranged via a Mg-dependent methyl migration to produce 3-hydroxy-3-methyl-2-ketobutyrate (HMKB). In the reductase reaction, this 2-ketoacid undergoes a metal-dependent reduction by NADPH to yield (R)-2,3-dihydroxy-isovalerate. The chain is Ketol-acid reductoisomerase (NADP(+)) from Synechococcus sp. (strain RCC307).